Here is a 493-residue protein sequence, read N- to C-terminus: Galactose-1-phosphate uridylyltransferase (493 aa).

Belongs to the galactose-1-phosphate uridylyltransferase type 2 family.

It localises to the cytoplasm. The catalysed reaction is alpha-D-galactose 1-phosphate + UDP-alpha-D-glucose = alpha-D-glucose 1-phosphate + UDP-alpha-D-galactose. The protein operates within carbohydrate metabolism; galactose metabolism. The chain is Galactose-1-phosphate uridylyltransferase (galT) from Streptococcus thermophilus.